The following is a 1213-amino-acid chain: DNA-directed RNA polymerase subunit beta' (1213 aa).

The Zn(2+) site is built by C60, C62, C75, and C78. Residues D450, D452, and D454 each contribute to the Mg(2+) site. Zn(2+)-binding residues include C819, C893, C900, and C903.

This sequence belongs to the RNA polymerase beta' chain family. As to quaternary structure, the RNAP catalytic core consists of 2 alpha, 1 beta, 1 beta' and 1 omega subunit. When a sigma factor is associated with the core the holoenzyme is formed, which can initiate transcription. The cofactor is Mg(2+). Requires Zn(2+) as cofactor.

The catalysed reaction is RNA(n) + a ribonucleoside 5'-triphosphate = RNA(n+1) + diphosphate. DNA-dependent RNA polymerase catalyzes the transcription of DNA into RNA using the four ribonucleoside triphosphates as substrates. This is DNA-directed RNA polymerase subunit beta' from Streptococcus pyogenes serotype M6 (strain ATCC BAA-946 / MGAS10394).